A 388-amino-acid chain; its full sequence is Nitric oxide reductase FlRd-NAD(+) reductase (388 aa).

It belongs to the FAD-dependent oxidoreductase family. FAD serves as cofactor.

The protein resides in the cytoplasm. The catalysed reaction is 2 reduced [nitric oxide reductase rubredoxin domain] + NAD(+) + H(+) = 2 oxidized [nitric oxide reductase rubredoxin domain] + NADH. It participates in nitrogen metabolism; nitric oxide reduction. One of at least two accessory proteins for anaerobic nitric oxide (NO) reductase. Reduces the rubredoxin moiety of NO reductase. The protein is Nitric oxide reductase FlRd-NAD(+) reductase of Aeromonas hydrophila subsp. hydrophila (strain ATCC 7966 / DSM 30187 / BCRC 13018 / CCUG 14551 / JCM 1027 / KCTC 2358 / NCIMB 9240 / NCTC 8049).